The primary structure comprises 147 residues: Mannitol-specific cryptic phosphotransferase enzyme IIA component (147 aa).

Positions Asp5–Gly147 constitute a PTS EIIA type-2 domain. His67 functions as the Tele-phosphohistidine intermediate in the catalytic mechanism. His67 is modified (phosphohistidine; by HPr).

The protein resides in the cytoplasm. Its function is as follows. The phosphoenolpyruvate-dependent sugar phosphotransferase system (sugar PTS), a major carbohydrate active transport system, catalyzes the phosphorylation of incoming sugar substrates concomitantly with their translocation across the cell membrane. The enzyme II CmtAB PTS system is involved in D-mannitol transport. The polypeptide is Mannitol-specific cryptic phosphotransferase enzyme IIA component (cmtB) (Escherichia coli O157:H7).